We begin with the raw amino-acid sequence, 130 residues long: Small ribosomal subunit protein uS8 (130 aa).

This sequence belongs to the universal ribosomal protein uS8 family. Part of the 30S ribosomal subunit. Contacts proteins S5 and S12.

One of the primary rRNA binding proteins, it binds directly to 16S rRNA central domain where it helps coordinate assembly of the platform of the 30S subunit. The sequence is that of Small ribosomal subunit protein uS8 from Pseudomonas fluorescens (strain Pf0-1).